Here is a 222-residue protein sequence, read N- to C-terminus: MGLPFIVLNYKTYLQGTGQGAMEIAKACKAVSEESGVEIAVAPQLPDIYRVASEVALPVFSQHLDGIGAGSFTGHVFGKCIKEAGAVGTLINHSEKRLTLAEIEASLKAAKEFGLRSIICTNNVPTTAAAAVLGPDYVAIEPPELIGSGIPVSKADPEVVSGSVEAVAKINPRVKVLCGAGISKGEDLRAALDLGSQGVLLASGIVKATDPKAALEDLIRLI.

9 to 11 (NYK) lines the substrate pocket. H93 functions as the Electrophile in the catalytic mechanism. E141 acts as the Proton acceptor in catalysis. Substrate is bound by residues I146, G181, and 202-203 (AS).

Belongs to the triosephosphate isomerase family. As to quaternary structure, homotetramer; dimer of dimers.

The protein localises to the cytoplasm. It carries out the reaction D-glyceraldehyde 3-phosphate = dihydroxyacetone phosphate. It participates in carbohydrate biosynthesis; gluconeogenesis. It functions in the pathway carbohydrate degradation; glycolysis; D-glyceraldehyde 3-phosphate from glycerone phosphate: step 1/1. Functionally, involved in the gluconeogenesis. Catalyzes stereospecifically the conversion of dihydroxyacetone phosphate (DHAP) to D-glyceraldehyde-3-phosphate (G3P). The polypeptide is Triosephosphate isomerase (Methanosarcina barkeri (strain Fusaro / DSM 804)).